Here is a 406-residue protein sequence, read N- to C-terminus: 4-hydroxy-3-methylbut-2-en-1-yl diphosphate synthase (ferredoxin) (406 aa).

The [4Fe-4S] cluster site is built by Cys315, Cys318, Cys349, and Glu356.

The protein belongs to the IspG family. The cofactor is [4Fe-4S] cluster.

The enzyme catalyses (2E)-4-hydroxy-3-methylbut-2-enyl diphosphate + 2 oxidized [2Fe-2S]-[ferredoxin] + H2O = 2-C-methyl-D-erythritol 2,4-cyclic diphosphate + 2 reduced [2Fe-2S]-[ferredoxin] + H(+). It functions in the pathway isoprenoid biosynthesis; isopentenyl diphosphate biosynthesis via DXP pathway; isopentenyl diphosphate from 1-deoxy-D-xylulose 5-phosphate: step 5/6. Its function is as follows. Converts 2C-methyl-D-erythritol 2,4-cyclodiphosphate (ME-2,4cPP) into 1-hydroxy-2-methyl-2-(E)-butenyl 4-diphosphate. This Microcystis aeruginosa (strain NIES-843 / IAM M-2473) protein is 4-hydroxy-3-methylbut-2-en-1-yl diphosphate synthase (ferredoxin).